The sequence spans 115 residues: NADH-ubiquinone oxidoreductase chain 3 (115 aa).

A run of 3 helical transmembrane segments spans residues 4–24 (LVTM…AFWL), 55–75 (FFLV…LLPM), and 86–106 (TMTL…AYEW).

The protein belongs to the complex I subunit 3 family. As to quaternary structure, core subunit of respiratory chain NADH dehydrogenase (Complex I) which is composed of 45 different subunits. Interacts with TMEM186. Interacts with TMEM242.

The protein resides in the mitochondrion inner membrane. The enzyme catalyses a ubiquinone + NADH + 5 H(+)(in) = a ubiquinol + NAD(+) + 4 H(+)(out). Functionally, core subunit of the mitochondrial membrane respiratory chain NADH dehydrogenase (Complex I) which catalyzes electron transfer from NADH through the respiratory chain, using ubiquinone as an electron acceptor. Essential for the catalytic activity of complex I. The sequence is that of NADH-ubiquinone oxidoreductase chain 3 from Nelsonia neotomodon (Diminutive woodrat).